Consider the following 262-residue polypeptide: Glycerol uptake facilitator protein (262 aa).

Topologically, residues 1–7 (MNFCSKK) are cytoplasmic. A helical transmembrane segment spans residues 8–36 (KILKQCFFEFLGTGLIIFLGISSLVVSKL). At 37–41 (TNFHF) the chain is on the extracellular side. The helical transmembrane segment at 42-62 (NHCEISCIWGLGVFISICFCS) threads the bilayer. At 63–65 (SVS) the chain is on the cytoplasmic side. Residues 66–69 (GAHL) lie within the membrane without spanning it. An NPA 1 motif is present at residues 70 to 72 (NPA). Residues 70-80 (NPAITIFLFLS) constitute an intramembrane region (helical). Topologically, residues 81-86 (SQFNKK) are cytoplasmic. The chain crosses the membrane as a helical span at residues 87-110 (KVIPYILSQISGTFFFTFLIYLIF). The Extracellular portion of the chain corresponds to 111–145 (NNLLNSFESKYNIVRGTKKSLELASLFCVFPKENY). The helical transmembrane segment at 146–171 (NFIHDFILEILIGIIFIIILMKLSEK) threads the bilayer. The Cytoplasmic segment spans residues 172–180 (NNLFKFYKF). The chain crosses the membrane as a helical span at residues 181 to 197 (INPFLIGTLVIIINLFL). Residues 198 to 201 (TSYS) are Extracellular-facing. Residues 202–205 (NITL) lie within the membrane without spanning it. The NPA 2 motif lies at 206-208 (NPA). Positions 206-219 (NPARDLGPRIFLSL) form an intramembrane region, helical. Topologically, residues 220–234 (IGWGKLAFTGDDNII) are extracellular. Residues 235 to 259 (FPYFLIPTIAPIIGINLGGWIYILY) traverse the membrane as a helical segment. Residues 260-262 (IKK) lie on the Cytoplasmic side of the membrane.

It belongs to the MIP/aquaporin (TC 1.A.8) family.

The protein resides in the cell membrane. The catalysed reaction is glycerol(in) = glycerol(out). Its function is as follows. Mediates glycerol diffusion across the cytoplasmic membrane via a pore-type mechanism. The chain is Glycerol uptake facilitator protein (glpF) from Buchnera aphidicola subsp. Schizaphis graminum (strain Sg).